The primary structure comprises 239 residues: Pyridoxine 5'-phosphate synthase (239 aa).

Asparagine 7 serves as a coordination point for 3-amino-2-oxopropyl phosphate. Residue 9–10 (DH) coordinates 1-deoxy-D-xylulose 5-phosphate. Arginine 18 provides a ligand contact to 3-amino-2-oxopropyl phosphate. Histidine 43 serves as the catalytic Proton acceptor. 1-deoxy-D-xylulose 5-phosphate contacts are provided by arginine 45 and histidine 50. Glutamate 70 serves as the catalytic Proton acceptor. Position 100 (threonine 100) interacts with 1-deoxy-D-xylulose 5-phosphate. The active-site Proton donor is histidine 191. Residues glycine 192 and 213 to 214 (GH) contribute to the 3-amino-2-oxopropyl phosphate site.

It belongs to the PNP synthase family. As to quaternary structure, homooctamer; tetramer of dimers.

It localises to the cytoplasm. It catalyses the reaction 3-amino-2-oxopropyl phosphate + 1-deoxy-D-xylulose 5-phosphate = pyridoxine 5'-phosphate + phosphate + 2 H2O + H(+). It functions in the pathway cofactor biosynthesis; pyridoxine 5'-phosphate biosynthesis; pyridoxine 5'-phosphate from D-erythrose 4-phosphate: step 5/5. In terms of biological role, catalyzes the complicated ring closure reaction between the two acyclic compounds 1-deoxy-D-xylulose-5-phosphate (DXP) and 3-amino-2-oxopropyl phosphate (1-amino-acetone-3-phosphate or AAP) to form pyridoxine 5'-phosphate (PNP) and inorganic phosphate. The sequence is that of Pyridoxine 5'-phosphate synthase from Geobacter sp. (strain M21).